Here is a 246-residue protein sequence, read N- to C-terminus: Uridylate kinase (246 aa).

18 to 21 (KVSG) lines the ATP pocket. A UMP-binding site is contributed by Gly-60. ATP-binding residues include Gly-61 and Arg-65. Residues Asp-80 and 141-148 (TGNPFFTT) contribute to the UMP site. ATP-binding residues include Thr-168, Gln-169, Tyr-174, and Asp-177.

This sequence belongs to the UMP kinase family. As to quaternary structure, homohexamer.

It localises to the cytoplasm. It carries out the reaction UMP + ATP = UDP + ADP. It functions in the pathway pyrimidine metabolism; CTP biosynthesis via de novo pathway; UDP from UMP (UMPK route): step 1/1. With respect to regulation, inhibited by UTP. Catalyzes the reversible phosphorylation of UMP to UDP. This is Uridylate kinase from Gluconobacter oxydans (strain 621H) (Gluconobacter suboxydans).